Reading from the N-terminus, the 1450-residue chain is DNA-directed RNA polymerase RPB1 homolog (1450 aa).

The protein belongs to the RNA polymerase beta' chain family. As to quaternary structure, part of the viral DNA-directed RNA polymerase that consists of 8 polII-like subunits (RPB1, RPB2, RPB3, RPB5, RPB6, RPB7, RPB9, RPB10), a capping enzyme and a termination factor.

The protein localises to the virion. It carries out the reaction RNA(n) + a ribonucleoside 5'-triphosphate = RNA(n+1) + diphosphate. In terms of biological role, catalytic component of the DNA-directed RNA polymerase (RNAP) that catalyzes the transcription in the cytoplasm of viral DNA into RNA using the four ribonucleoside triphosphates as substrates. Forms the polymerase active center together with RPB2. Part of the core element with the central large cleft, the clamp element that moves to open and close the cleft and the jaws that are thought to grab the incoming DNA template. This chain is DNA-directed RNA polymerase RPB1 homolog, found in African swine fever virus (isolate Pig/Kenya/KEN-50/1950) (ASFV).